Here is a 721-residue protein sequence, read N- to C-terminus: MASFKGFSANTVPVSKTRKDTSSLTATPGLRAPSMSSPVDMAQSREFLTKAIEHGSMSIPYQHVNVPKVDRKVVSLVVRPFSAGAFSISGVISPAHAYLLECLPQLEQAMAFVASPEAFQASDVAKRFTIKPGMSLQDAITAFINFVSAMLKMTVTRQNFDVIIAEIERLASSGVVNRTEEAKVADEELMLFGLDHRAPQQIDVSEPVGISRAVEIQTTNNVHLAPGLGNIDPEIYNEGRFMFMQHKPLAADQSYFTTETADYFKIYPTYDEHDGRMVDQKQSGLILCTKDEVLAEQTIFKLDVPDDKTVHLLDRDDDHVVARFTRVFIEDVAPSHHAAQRSNQRSLLDDLYANTQVVSVTPSALRWVIKHGVSDGIVNRKNVKICVGFDPLYTLATSNGLSLCSILMDEKLSVLNSACKMTLRSLLKTHRDLDLHRAFQRVISQSYASLMCYYHPSRKLAYGELLFMSSQSDTVDGIKLQLDASRQCHECPLLQQKIVELEKHLIVQKSASSDPTPVALQPLLSQLRELSSEVTRLQMDLSRTQAINTRLEADVKSAQSCSLDMYLKHHTCINSHVKEDELMDAVRIAPDVRQELMLKRKATRQEWWERIARETSTTFQSKIDELTLMNGKQAHEISELRDSVTNYEKQVAELVSTITQNQTTYQQELQALVAKNIELDALNQRQAKSVRITSSLLSATPIDAVDGASDLIDFSVPADEL.

The interval 1 to 13 (MASFKGFSANTVP) is interaction with sigma-NS. The segment at 1-38 (MASFKGFSANTVPVSKTRKDTSSLTATPGLRAPSMSSP) is RNA-binding. The interval 14 to 40 (VSKTRKDTSSLTATPGLRAPSMSSPVD) is interaction with mu-2. The disordered stretch occupies residues 17 to 37 (TRKDTSSLTATPGLRAPSMSS). The tract at residues 471–721 (QSDTVDGIKL…IDFSVPADEL (251 aa)) is involved in the formation of factory-like inclusions. 2 coiled-coil regions span residues 523–556 (LLSQ…ADVK) and 632–686 (KQAH…NQRQ).

It belongs to the orthoreovirus mu-NS protein family. Interacts with mu-2. Interacts with sigma-NS; in viral factories. Interacts with the inner capsid proteins lambda-1 and sigma-2, and outer capsid protein lambda-2; in viral factories. Post-translationally, the N-terminus is blocked.

It is found in the host cytoplasm. Its function is as follows. Non-structural protein implicated with protein sigma-NS in forming the matrix of viral factories, which are large inclusions in the host cytoplasm where replication intermediates are assembled and viral RNA replication takes place. Together with mu-2, recruits the other core proteins to these factories. The polypeptide is Protein mu-NS (M3) (Mammalia (T2J)).